Consider the following 65-residue polypeptide: MPKLKSVRGAVKRFKKNSSGCFKHKQAYLRHLLTKKSTNRKRNLRFKSIVSKGDKNLVVRCLPYA.

The protein belongs to the bacterial ribosomal protein bL35 family.

This chain is Large ribosomal subunit protein bL35, found in Baumannia cicadellinicola subsp. Homalodisca coagulata.